Here is a 161-residue protein sequence, read N- to C-terminus: SsrA-binding protein (161 aa).

This sequence belongs to the SmpB family.

The protein localises to the cytoplasm. Functionally, required for rescue of stalled ribosomes mediated by trans-translation. Binds to transfer-messenger RNA (tmRNA), required for stable association of tmRNA with ribosomes. tmRNA and SmpB together mimic tRNA shape, replacing the anticodon stem-loop with SmpB. tmRNA is encoded by the ssrA gene; the 2 termini fold to resemble tRNA(Ala) and it encodes a 'tag peptide', a short internal open reading frame. During trans-translation Ala-aminoacylated tmRNA acts like a tRNA, entering the A-site of stalled ribosomes, displacing the stalled mRNA. The ribosome then switches to translate the ORF on the tmRNA; the nascent peptide is terminated with the 'tag peptide' encoded by the tmRNA and targeted for degradation. The ribosome is freed to recommence translation, which seems to be the essential function of trans-translation. The sequence is that of SsrA-binding protein from Vibrio parahaemolyticus serotype O3:K6 (strain RIMD 2210633).